A 344-amino-acid chain; its full sequence is MSTSITLFGAGSWGTALAVHLAAAGRDVTLWARRDEAVERMRTTHRNPTYLSDIEIPPSVHVTSDLEAAAGASSLWAVAVPSQNLRSVATRIAPLTRPGTTVVSLAKGIENETLQTMSQVLADELGGMEAQQIGVLYGPSHAEEVAENQPTTLVAAAPTEPRAEWVQDAFMTERLRVYVNTDVVGVEIGGSAKNVLAIAAGIGDGVGYGDNAKAALVTRGLAEIRRLGIAMGAKPRTFAGLAGIGDLLVTCMSPHSRNRYLGEQIGNGMTLEEIESEMDMVAEGVRTTQSVQDLARHHDIEMPVTEAVHRVLFENRRPEDMVDELMTRSAKREHWLPQGLRNVS.

Positions 12, 13, 33, 34, and 107 each coordinate NADPH. Lys-107, Gly-138, and Ser-140 together coordinate sn-glycerol 3-phosphate. Ala-142 is an NADPH binding site. Positions 193, 246, 256, 257, and 258 each coordinate sn-glycerol 3-phosphate. Lys-193 functions as the Proton acceptor in the catalytic mechanism. Arg-257 lines the NADPH pocket. Positions 281 and 283 each coordinate NADPH.

The protein belongs to the NAD-dependent glycerol-3-phosphate dehydrogenase family.

The protein localises to the cytoplasm. It catalyses the reaction sn-glycerol 3-phosphate + NAD(+) = dihydroxyacetone phosphate + NADH + H(+). The enzyme catalyses sn-glycerol 3-phosphate + NADP(+) = dihydroxyacetone phosphate + NADPH + H(+). The protein operates within membrane lipid metabolism; glycerophospholipid metabolism. Its function is as follows. Catalyzes the reduction of the glycolytic intermediate dihydroxyacetone phosphate (DHAP) to sn-glycerol 3-phosphate (G3P), the key precursor for phospholipid synthesis. The sequence is that of Glycerol-3-phosphate dehydrogenase [NAD(P)+] 2 from Salinibacter ruber (strain DSM 13855 / M31).